A 239-amino-acid chain; its full sequence is MMTSLGNDVLRARLQSGAEVLAPGLDAAQIDRLMDFLALLQKWNRVYNLTALQDPQEMLTQHLLDSLAALAPLRRQLAHLAHLAHSTGLAGPGQGAGPRRLLDVGSGAGLPGVVFAICCPQLDVHCVDSVGKKAAFIGQVALQLRLRNLHGVHARVETLTTPFEIICCRAFAALPDFVRWTRSALRAPDGVWLALKGKHPGAEIAALPADVQVFHVERLTVPGLAAERCIVWLRPAALA.

Residues G105, L110, 156 to 157 (VE), and R169 each bind S-adenosyl-L-methionine.

Belongs to the methyltransferase superfamily. RNA methyltransferase RsmG family.

It localises to the cytoplasm. It carries out the reaction guanosine(527) in 16S rRNA + S-adenosyl-L-methionine = N(7)-methylguanosine(527) in 16S rRNA + S-adenosyl-L-homocysteine. Functionally, specifically methylates the N7 position of guanine in position 527 of 16S rRNA. The protein is Ribosomal RNA small subunit methyltransferase G of Verminephrobacter eiseniae (strain EF01-2).